A 479-amino-acid chain; its full sequence is Poly(A) polymerase catalytic subunit (479 aa).

Active-site residues include aspartate 202 and aspartate 204. Ca(2+)-binding residues include aspartate 202, aspartate 204, and aspartate 253.

Belongs to the poxviridae poly(A) polymerase catalytic subunit family. In terms of assembly, heterodimer of a large (catalytic) subunit and a small (regulatory) subunit.

The catalysed reaction is RNA(n) + ATP = RNA(n)-3'-adenine ribonucleotide + diphosphate. Functionally, polymerase that creates the 3'-poly(A) tail of mRNA's. The sequence is that of Poly(A) polymerase catalytic subunit (OPG063) from Cowpox virus (strain GRI-90 / Grishak) (CPV).